Consider the following 99-residue polypeptide: Nucleoid-associated protein SZO_16661 (99 aa).

Belongs to the YbaB/EbfC family. As to quaternary structure, homodimer.

Its subcellular location is the cytoplasm. It localises to the nucleoid. Binds to DNA and alters its conformation. May be involved in regulation of gene expression, nucleoid organization and DNA protection. The polypeptide is Nucleoid-associated protein SZO_16661 (Streptococcus equi subsp. zooepidemicus (strain H70)).